Here is a 1489-residue protein sequence, read N- to C-terminus: Type-2 histone deacetylase 1 (1489 aa).

Composition is skewed to low complexity over residues 135 to 163 (NNNNINNNNNSNGSNSSNNSHNGGSSPSG), 190 to 259 (SNGN…SRNL), 281 to 306 (NIINNNSNNNTNNNNNIMNGTTTSTT), and 325 to 399 (SPTS…NINN). Disordered stretches follow at residues 135–259 (NNNN…SRNL), 281–556 (NIIN…NYQQ), 915–935 (NNNNNNNNNNNNNNNEEDDQL), 955–1024 (NISK…RDRD), and 1151–1185 (STGINQFSTSTPITTTGTATVTPGSTTSSTNGEQC). The segment covering 400–430 (VANGTPRPSLQTSRLQGKLPSPQQYNTSPSH) has biased composition (polar residues). Composition is skewed to low complexity over residues 431-450 (QQYPSPKNNNNSNNIIPIQS), 486-553 (NNNN…NNSN), 915-928 (NNNNNNNNNNNNNN), and 959-988 (NNNNNNNNNNNNNNNNNNNNNNNNNNNNNN). Basic and acidic residues-rich tracts occupy residues 989–1001 (RNRDRDREFERDN) and 1010–1024 (IEKERNRNNRIRDRD). Positions 1158–1180 (STSTPITTTGTATVTPGSTTSST) are enriched in low complexity. His1232 (proton acceptor) is an active-site residue. A compositionally biased stretch (acidic residues) spans 1325–1335 (EQNDYDDDDNN). The disordered stretch occupies residues 1325–1374 (EQNDYDDDDNNNDVNNNNNNNNNNNNNNNNNNNNKNNNNNNSNSITQQST). Residues 1336 to 1367 (NDVNNNNNNNNNNNNNNNNNNNNKNNNNNNSN) show a composition bias toward low complexity.

The protein belongs to the histone deacetylase family. HD type 2 subfamily.

The protein resides in the nucleus. The protein localises to the cytoplasm. It carries out the reaction N(6)-acetyl-L-lysyl-[histone] + H2O = L-lysyl-[histone] + acetate. Responsible for the deacetylation of lysine residues on the N-terminal part of the core histones (H2A, H2B, H3 and H4). Histone deacetylation plays an important role in transcriptional regulation, cell cycle progression and developmental events. Histone deacetylases act via the formation of large multiprotein complexes. This is Type-2 histone deacetylase 1 (hdaD) from Dictyostelium discoideum (Social amoeba).